We begin with the raw amino-acid sequence, 1413 residues long: DNA-directed RNA polymerase subunit beta' (1413 aa).

Residues Cys-70, Cys-72, Cys-85, and Cys-88 each coordinate Zn(2+). Asp-460, Asp-462, and Asp-464 together coordinate Mg(2+). Residues Cys-819, Cys-893, Cys-900, and Cys-903 each coordinate Zn(2+).

It belongs to the RNA polymerase beta' chain family. The RNAP catalytic core consists of 2 alpha, 1 beta, 1 beta' and 1 omega subunit. When a sigma factor is associated with the core the holoenzyme is formed, which can initiate transcription. Mg(2+) serves as cofactor. Requires Zn(2+) as cofactor.

It catalyses the reaction RNA(n) + a ribonucleoside 5'-triphosphate = RNA(n+1) + diphosphate. Functionally, DNA-dependent RNA polymerase catalyzes the transcription of DNA into RNA using the four ribonucleoside triphosphates as substrates. The chain is DNA-directed RNA polymerase subunit beta' from Burkholderia ambifaria (strain MC40-6).